We begin with the raw amino-acid sequence, 73 residues long: Myosin-IB light chain (73 aa).

EF-hand domains lie at 3–38 and 38–73; these read DEKTQLIEAFYNFDGDYDGFVSVEEFRGIIRDGLPM and MTEAEITEFFEAADPNNTGFIDYKAFAAMLYSVDES. Asp-16, Asp-18, Asp-20, and Glu-27 together coordinate Ca(2+).

As to quaternary structure, myosin I is a dimer of a heavy and a light chain. Inability to self-assemble into filaments. Interacts with myoB. Does not interact with myoC or myoD.

Its function is as follows. Functions as the light chain for myosin-B. Binds calcium with submicromolar affinity and may sense physiological calcium changes. The polypeptide is Myosin-IB light chain (mlcB) (Dictyostelium discoideum (Social amoeba)).